The sequence spans 319 residues: UDP-N-acetylenolpyruvoylglucosamine reductase (319 aa).

The 164-residue stretch at 35–198 (VGGPAEAMFK…TGCVLAGRPD (164 aa)) folds into the FAD-binding PCMH-type domain. Arginine 178 is an active-site residue. Catalysis depends on serine 227, which acts as the Proton donor. The active site involves glutamate 302.

This sequence belongs to the MurB family. FAD serves as cofactor.

It is found in the cytoplasm. The enzyme catalyses UDP-N-acetyl-alpha-D-muramate + NADP(+) = UDP-N-acetyl-3-O-(1-carboxyvinyl)-alpha-D-glucosamine + NADPH + H(+). It functions in the pathway cell wall biogenesis; peptidoglycan biosynthesis. In terms of biological role, cell wall formation. The polypeptide is UDP-N-acetylenolpyruvoylglucosamine reductase (Rhodospirillum rubrum (strain ATCC 11170 / ATH 1.1.1 / DSM 467 / LMG 4362 / NCIMB 8255 / S1)).